Reading from the N-terminus, the 906-residue chain is MKKKVTIVTIILFLLVIVGSFGKVTDFIINLEWFKEIGYTSVYFTKLAAILKLMIPIFIIIYTGLWFYYKSIRKIIIKWNKVVEVNVKTEKLKKRVAIVIDVIASFFVAYFTSSVYWYRILQFTSGNSFNIKDPIFNLDVSFYVFRLPLIESLYGVMLLFLIFMAVLTVILYIVLSLRDRVYNRNIGGINISFKEFFKGLSDFAGRQFAIISGLIMFLVAVGYAIRSFNLVYSPRGVVYGGGYTDIHVSLVFYVIIIAAAIVSSVVIFTSIIKYKIKPIFVSIVAILILIIGQSITAEIVQNLIVKSNEKNLEAPYIKNNIEYTRKAFNIDKLSESNFPSSDSLTQADIDSNRDTVNNIKVNSVTPALEFYNQVQVVRYYYDFRDLDVDRYNIGGKYSEVFLAPREIDSKSLEGNADTWQNRHLIYTHGYGLVMSKVNSVTSEGQPNFVIKDIPPQNSTNLKITNPRIYYGEETDDYAIANNTLGEFDYPDGSKNKTNNYDGKGGIKANILNRLIFAINKRDSNFLLSENITSNSKILINRNIMDRLNKIAPFLSYDKDPYVVLSGGKLFWIVDAYTTSDRFPYSQPYNNVNYIRNSVKVVIDAVDGTTNFYIVDKNDPIANSYSKIFPGLFKDVSQVPKDIRSHFKYPEDLFSTQCNVLGKYHVTDTGVFYNSEDLWETAKNQKQINGEKGVNDASYFIMRLPGENKSEMVLMEYFNMKDKDNMSAIFGARMDGNNYGKLILYKLPTDKTVYSPYLFKQKLNQDPSISKEVSLWNTQGSSVQFGDTSIIPIKNSLLYVEPVYLRAQGKNSMPEVKRVIVSFGNKMVMANSIDEALNQIFNNSSNNQSETRTETGGTSTDSSNNKDKLKQAQDLYNQAVDAQKNGDWSKYGDYINKLGKTLDELNK.

A run of 7 helical transmembrane segments spans residues 7 to 29 (IVTI…DFII), 47 to 69 (LAAI…WFYY), 96 to 118 (VAIV…VYWY), 153 to 175 (LYGV…YIVL), 208 to 230 (FAII…SFNL), 250 to 272 (LVFY…TSII), and 279 to 301 (IFVS…EIVQ). Over residues 842–862 (NSSNNQSETRTETGGTSTDSS) the composition is skewed to low complexity. The disordered stretch occupies residues 842–875 (NSSNNQSETRTETGGTSTDSSNNKDKLKQAQDLY).

This sequence belongs to the UPF0182 family.

The protein localises to the cell membrane. This Clostridium acetobutylicum (strain ATCC 824 / DSM 792 / JCM 1419 / IAM 19013 / LMG 5710 / NBRC 13948 / NRRL B-527 / VKM B-1787 / 2291 / W) protein is UPF0182 protein CA_C0010.